A 512-amino-acid polypeptide reads, in one-letter code: Threonine synthase (512 aa).

Lys-121 is modified (N6-(pyridoxal phosphate)lysine). Residues Gly-273, Asn-274, Phe-275, Asp-277, and Thr-445 each contribute to the pyridoxal 5'-phosphate site.

Belongs to the threonine synthase family. It depends on pyridoxal 5'-phosphate as a cofactor.

It catalyses the reaction O-phospho-L-homoserine + H2O = L-threonine + phosphate. It functions in the pathway amino-acid biosynthesis; L-threonine biosynthesis; L-threonine from L-aspartate: step 5/5. Its function is as follows. Catalyzes the gamma-elimination of phosphate from L-phosphohomoserine and the beta-addition of water to produce L-threonine. The polypeptide is Threonine synthase (THR4) (Eremothecium gossypii (strain ATCC 10895 / CBS 109.51 / FGSC 9923 / NRRL Y-1056) (Yeast)).